The following is a 497-amino-acid chain: uncharacterized protein (497 aa).

Over residues 44-74 (IRQEKEMKRHDDDGRQYQSDRKFAKSKHDDI) the composition is skewed to basic and acidic residues. Disordered stretches follow at residues 44–95 (IRQE…SVGR), 120–151 (VSRS…EHRD), and 195–227 (GNVI…TSAR). Low complexity predominate over residues 120 to 131 (VSRSSSIGHSGS). 3 positions are modified to phosphoserine: Ser-123, Ser-125, and Ser-131. Residue Thr-132 is modified to Phosphothreonine. Residues 213–227 (ASLSRAASNSSTSAR) show a composition bias toward low complexity. Thr-258 bears the Phosphothreonine mark. At Ser-310 the chain carries Phosphoserine. Residues 367-385 (NVNPSNQDLASVKQPSGFS) show a composition bias toward polar residues. The tract at residues 367-497 (NVNPSNQDLA…GFPDTSRPPH (131 aa)) is disordered. Positions 400-409 (NFSNDDSSFF) are enriched in low complexity. Position 436 is a phosphoserine (Ser-436). The span at 448 to 472 (GLSSGASIPSAPPGFGYQQPSFPYS) shows a compositional bias: low complexity.

The protein resides in the cytoplasm. The protein localises to the nucleus. This is an uncharacterized protein from Schizosaccharomyces pombe (strain 972 / ATCC 24843) (Fission yeast).